A 925-amino-acid chain; its full sequence is Isoleucine--tRNA ligase (925 aa).

The short motif at 57-67 (PYANGDIHIGH) is the 'HIGH' region element. Glu-553 lines the L-isoleucyl-5'-AMP pocket. Residues 594 to 598 (KMSKS) carry the 'KMSKS' region motif. ATP is bound at residue Lys-597. Residues Cys-889, Cys-892, Cys-909, and Cys-912 each contribute to the Zn(2+) site.

Belongs to the class-I aminoacyl-tRNA synthetase family. IleS type 1 subfamily. Monomer. Requires Zn(2+) as cofactor.

It is found in the cytoplasm. It carries out the reaction tRNA(Ile) + L-isoleucine + ATP = L-isoleucyl-tRNA(Ile) + AMP + diphosphate. Functionally, catalyzes the attachment of isoleucine to tRNA(Ile). As IleRS can inadvertently accommodate and process structurally similar amino acids such as valine, to avoid such errors it has two additional distinct tRNA(Ile)-dependent editing activities. One activity is designated as 'pretransfer' editing and involves the hydrolysis of activated Val-AMP. The other activity is designated 'posttransfer' editing and involves deacylation of mischarged Val-tRNA(Ile). The polypeptide is Isoleucine--tRNA ligase (Brevibacillus brevis (strain 47 / JCM 6285 / NBRC 100599)).